The primary structure comprises 510 residues: Indoleacetate--CoA ligase (510 aa).

Belongs to the ATP-dependent AMP-binding enzyme family. As to quaternary structure, monomer.

The enzyme catalyses (indol-3-yl)acetate + ATP + CoA = (indol-3-yl)acetyl-CoA + AMP + diphosphate. The catalysed reaction is (indol-3-yl)acetate + ATP + H(+) = (indol-3-yl)acetyl-AMP + diphosphate. It carries out the reaction (indol-3-yl)acetyl-AMP + CoA = (indol-3-yl)acetyl-CoA + AMP + H(+). With respect to regulation, inhibited by high concentrations of substrates, and by the synthetic auxin compound 2,4-dichlorophenoxyacetate (2,4-D), which does not serve as substrate. Functionally, involved in degradation of indoleacetate, the most common member of the auxin class of plant hormones. Highly specific indoleacetate-CoA ligase which catalyzes the ATP-dependent activation of indoleacetate (IAA) to indoleacetyl-CoA. Also activates some closely related compounds such as the non-physiological compound (2-naphthyl)acetate and phenylacetate, which seems to be a fortuitous substrate for IaaB. The polypeptide is Indoleacetate--CoA ligase (Aromatoleum aromaticum (strain DSM 19018 / LMG 30748 / EbN1) (Azoarcus sp. (strain EbN1))).